The chain runs to 197 residues: MKTKNRPPRRRTPMQDTEATPGEQTPDRPQSGSGGSELTKGLRSRTARASGGRGEVSRRRQGSGGRRENSVQRRLESNERERQRMHKLNNAFQALREVIPHVRADKKLSKIETLTLAKNYIKSLTATILTMSSSRLPGLEAPGPAPGPKLYQHYHHQQQQQQQQQQVAGAMLGVTEDQPQGHLQRYSTQIHSFREGS.

Residues 1–12 (MKTKNRPPRRRT) show a composition bias toward basic residues. Disordered regions lie at residues 1–82 (MKTK…ERER) and 178–197 (QPQG…REGS). Phosphothreonine occurs at positions 12 and 25. The span at 65-82 (GRRENSVQRRLESNERER) shows a compositional bias: basic and acidic residues. A bHLH domain is found at 72 to 124 (QRRLESNERERQRMHKLNNAFQALREVIPHVRADKKLSKIETLTLAKNYIKSL).

Forms homodimers or heterodimers with TCF3 gene products E12 and E47. These dimers bind to the E-box site, however, heterodimer with MYOD1 does not bind target DNA. In terms of tissue distribution, expressed in pancreatic tissue only in acinar cells. There is a complete absence of expression in intra- or interlobular pancreatic ducts and in all islet cells.

It localises to the nucleus. Its function is as follows. Plays a role in controlling the transcriptional activity of MyoD, ensuring that expanding myoblast populations remain undifferentiated. Repression may occur through muscle-specific E-box occupancy by homodimers. May also negatively regulate bHLH-mediated transcription through an N-terminal repressor domain. Serves as a key regulator of acinar cell function, stability, and identity. Also required for normal organelle localization in exocrine cells and for mitochondrial calcium ion transport. May function as a unique regulator of gene expression in several different embryonic and postnatal cell lineages. Binds to the E-box consensus sequence 5'-CANNTG-3'. The sequence is that of Class A basic helix-loop-helix protein 15 (Bhlha15) from Mus musculus (Mouse).